Consider the following 619-residue polypeptide: Dihydroxy-acid dehydratase (619 aa).

Residue aspartate 81 coordinates Mg(2+). Cysteine 122 lines the [2Fe-2S] cluster pocket. Mg(2+) contacts are provided by aspartate 123 and lysine 124. An N6-carboxylysine modification is found at lysine 124. Cysteine 195 contributes to the [2Fe-2S] cluster binding site. Glutamate 494 is a Mg(2+) binding site. Catalysis depends on serine 520, which acts as the Proton acceptor.

The protein belongs to the IlvD/Edd family. Homodimer. It depends on [2Fe-2S] cluster as a cofactor. Mg(2+) is required as a cofactor.

It carries out the reaction (2R)-2,3-dihydroxy-3-methylbutanoate = 3-methyl-2-oxobutanoate + H2O. The enzyme catalyses (2R,3R)-2,3-dihydroxy-3-methylpentanoate = (S)-3-methyl-2-oxopentanoate + H2O. It functions in the pathway amino-acid biosynthesis; L-isoleucine biosynthesis; L-isoleucine from 2-oxobutanoate: step 3/4. It participates in amino-acid biosynthesis; L-valine biosynthesis; L-valine from pyruvate: step 3/4. In terms of biological role, functions in the biosynthesis of branched-chain amino acids. Catalyzes the dehydration of (2R,3R)-2,3-dihydroxy-3-methylpentanoate (2,3-dihydroxy-3-methylvalerate) into 2-oxo-3-methylpentanoate (2-oxo-3-methylvalerate) and of (2R)-2,3-dihydroxy-3-methylbutanoate (2,3-dihydroxyisovalerate) into 2-oxo-3-methylbutanoate (2-oxoisovalerate), the penultimate precursor to L-isoleucine and L-valine, respectively. This chain is Dihydroxy-acid dehydratase, found in Shewanella sp. (strain MR-4).